A 480-amino-acid polypeptide reads, in one-letter code: Protein nucleotidyltransferase YdiU (480 aa).

Residues Gly86, Gly88, Arg89, Lys109, Asp121, Gly122, Arg172, and Arg179 each coordinate ATP. The active-site Proton acceptor is Asp248. Mg(2+) contacts are provided by Asn249 and Asp258. Asp258 provides a ligand contact to ATP.

It belongs to the SELO family. It depends on Mg(2+) as a cofactor. Mn(2+) serves as cofactor.

The enzyme catalyses L-seryl-[protein] + ATP = 3-O-(5'-adenylyl)-L-seryl-[protein] + diphosphate. The catalysed reaction is L-threonyl-[protein] + ATP = 3-O-(5'-adenylyl)-L-threonyl-[protein] + diphosphate. It catalyses the reaction L-tyrosyl-[protein] + ATP = O-(5'-adenylyl)-L-tyrosyl-[protein] + diphosphate. It carries out the reaction L-histidyl-[protein] + UTP = N(tele)-(5'-uridylyl)-L-histidyl-[protein] + diphosphate. The enzyme catalyses L-seryl-[protein] + UTP = O-(5'-uridylyl)-L-seryl-[protein] + diphosphate. The catalysed reaction is L-tyrosyl-[protein] + UTP = O-(5'-uridylyl)-L-tyrosyl-[protein] + diphosphate. Its function is as follows. Nucleotidyltransferase involved in the post-translational modification of proteins. It can catalyze the addition of adenosine monophosphate (AMP) or uridine monophosphate (UMP) to a protein, resulting in modifications known as AMPylation and UMPylation. The chain is Protein nucleotidyltransferase YdiU from Salmonella paratyphi A (strain ATCC 9150 / SARB42).